The chain runs to 481 residues: uncharacterized protein (481 aa).

The chain crosses the membrane as a helical span at residues 18 to 38; sequence FMIVTAIAVAIFVVITGVVIF.

Its subcellular location is the cell inner membrane. In terms of biological role, involved in DNA conjugation in the recipient strain. This is an uncharacterized protein from Mycolicibacterium smegmatis (strain MKD8) (Mycobacterium smegmatis).